A 327-amino-acid polypeptide reads, in one-letter code: Annexin A8 (327 aa).

4 Annexin repeats span residues 21-92 (FNPD…ALMY), 93-164 (PPYR…CLLQ), 177-249 (GLAL…TVVK), and 253-324 (NLHG…NLVG). Met266, Gly268, Gly270, and Asp310 together coordinate Ca(2+).

It belongs to the annexin family.

Functionally, this protein is an anticoagulant protein that acts as an indirect inhibitor of the thromboplastin-specific complex, which is involved in the blood coagulation cascade. The sequence is that of Annexin A8 (ANXA8) from Bos taurus (Bovine).